Consider the following 104-residue polypeptide: Integration host factor subunit alpha (104 aa).

Belongs to the bacterial histone-like protein family. As to quaternary structure, heterodimer of an alpha and a beta chain.

Functionally, this protein is one of the two subunits of integration host factor, a specific DNA-binding protein that functions in genetic recombination as well as in transcriptional and translational control. The sequence is that of Integration host factor subunit alpha from Buchnera aphidicola subsp. Cinara cedri (strain Cc).